A 129-amino-acid polypeptide reads, in one-letter code: Large ribosomal subunit protein bL19 (129 aa).

This sequence belongs to the bacterial ribosomal protein bL19 family.

Functionally, this protein is located at the 30S-50S ribosomal subunit interface and may play a role in the structure and function of the aminoacyl-tRNA binding site. This chain is Large ribosomal subunit protein bL19, found in Paraburkholderia phytofirmans (strain DSM 17436 / LMG 22146 / PsJN) (Burkholderia phytofirmans).